The following is a 554-amino-acid chain: Dihydroxy-acid dehydratase (554 aa).

A Mg(2+)-binding site is contributed by D78. C119 is a binding site for [2Fe-2S] cluster. Mg(2+) is bound by residues D120 and K121. K121 carries the N6-carboxylysine modification. C191 contributes to the [2Fe-2S] cluster binding site. Position 442 (E442) interacts with Mg(2+). Residue S468 is the Proton acceptor of the active site.

Belongs to the IlvD/Edd family. As to quaternary structure, homodimer. It depends on [2Fe-2S] cluster as a cofactor. Mg(2+) is required as a cofactor.

It carries out the reaction (2R)-2,3-dihydroxy-3-methylbutanoate = 3-methyl-2-oxobutanoate + H2O. The enzyme catalyses (2R,3R)-2,3-dihydroxy-3-methylpentanoate = (S)-3-methyl-2-oxopentanoate + H2O. The protein operates within amino-acid biosynthesis; L-isoleucine biosynthesis; L-isoleucine from 2-oxobutanoate: step 3/4. It functions in the pathway amino-acid biosynthesis; L-valine biosynthesis; L-valine from pyruvate: step 3/4. Functionally, functions in the biosynthesis of branched-chain amino acids. Catalyzes the dehydration of (2R,3R)-2,3-dihydroxy-3-methylpentanoate (2,3-dihydroxy-3-methylvalerate) into 2-oxo-3-methylpentanoate (2-oxo-3-methylvalerate) and of (2R)-2,3-dihydroxy-3-methylbutanoate (2,3-dihydroxyisovalerate) into 2-oxo-3-methylbutanoate (2-oxoisovalerate), the penultimate precursor to L-isoleucine and L-valine, respectively. This is Dihydroxy-acid dehydratase from Thermotoga petrophila (strain ATCC BAA-488 / DSM 13995 / JCM 10881 / RKU-1).